The primary structure comprises 523 residues: Polyamine aminopropyltransferase (523 aa).

Helical transmembrane passes span 20–40 (VLLA…LALL), 51–71 (IVAT…GALL), 88–108 (AVLG…FAFL), 116–136 (LVLA…VPLL), 164–184 (LGAL…LGMI), 186–206 (GAAV…IFLL), and 215–235 (LVTA…LLVH). Residues 203–478 (IFLLRHVVSG…APTPAVPSTA (276 aa)) are spermidine synthase. The PABS domain occupies 231–465 (TLLVHSHDIE…GDWGFALARL (235 aa)). Position 261 (Gln-261) interacts with S-methyl-5'-thioadenosine. Asp-313 contributes to the spermidine binding site. S-methyl-5'-thioadenosine contacts are provided by residues Glu-333 and 365-366 (DA). Asp-386 functions as the Proton acceptor in the catalytic mechanism.

It belongs to the spermidine/spermine synthase family. Homodimer or homotetramer.

It is found in the cell membrane. It catalyses the reaction S-adenosyl 3-(methylsulfanyl)propylamine + putrescine = S-methyl-5'-thioadenosine + spermidine + H(+). Its pathway is amine and polyamine biosynthesis; spermidine biosynthesis; spermidine from putrescine: step 1/1. In terms of biological role, catalyzes the irreversible transfer of a propylamine group from the amino donor S-adenosylmethioninamine (decarboxy-AdoMet) to putrescine (1,4-diaminobutane) to yield spermidine. This is Polyamine aminopropyltransferase from Mycobacterium bovis (strain ATCC BAA-935 / AF2122/97).